The following is a 180-amino-acid chain: 3-phenylpropionate/cinnamic acid dioxygenase subunit beta (180 aa).

This sequence belongs to the bacterial ring-hydroxylating dioxygenase beta subunit family. This dioxygenase system consists of four proteins: the two subunits of the hydroxylase component (HcaE and HcaF), a ferredoxin (HcaC) and a ferredoxin reductase (HcaD).

The enzyme catalyses 3-phenylpropanoate + NADH + O2 + H(+) = 3-(cis-5,6-dihydroxycyclohexa-1,3-dien-1-yl)propanoate + NAD(+). The catalysed reaction is (E)-cinnamate + NADH + O2 + H(+) = (2E)-3-(cis-5,6-dihydroxycyclohexa-1,3-dien-1-yl)prop-2-enoate + NAD(+). It functions in the pathway aromatic compound metabolism; 3-phenylpropanoate degradation. Functionally, part of the multicomponent 3-phenylpropionate dioxygenase. Converts 3-phenylpropionic acid (PP) and cinnamic acid (CI) into 3-phenylpropionate-dihydrodiol (PP-dihydrodiol) and cinnamic acid-dihydrodiol (CI-dihydrodiol), respectively. The chain is 3-phenylpropionate/cinnamic acid dioxygenase subunit beta from Photorhabdus laumondii subsp. laumondii (strain DSM 15139 / CIP 105565 / TT01) (Photorhabdus luminescens subsp. laumondii).